We begin with the raw amino-acid sequence, 393 residues long: Protein TsgA (393 aa).

12 helical membrane passes run 11 to 31 (WISF…GMVM), 51 to 71 (FLNA…EIIP), 78 to 98 (FGFI…SLAL), 101 to 121 (AAMF…TFLI), 134 to 154 (LLFT…VAAF), 162 to 182 (WYWV…LTFG), 206 to 226 (IGVL…LGFI), 245 to 265 (ALVS…SFIL), 273 to 293 (ILTV…TGTQ), 298 to 318 (WFIL…ITLG), 332 to 352 (FILT…GPIV), and 361 to 381 (LLTA…LGFV).

This sequence belongs to the major facilitator superfamily. TsgA family.

The protein localises to the cell inner membrane. The polypeptide is Protein TsgA (Salmonella schwarzengrund (strain CVM19633)).